The primary structure comprises 356 residues: Histidinol-phosphate aminotransferase (356 aa).

The residue at position 214 (lysine 214) is an N6-(pyridoxal phosphate)lysine.

Belongs to the class-II pyridoxal-phosphate-dependent aminotransferase family. Histidinol-phosphate aminotransferase subfamily. As to quaternary structure, homodimer. Pyridoxal 5'-phosphate serves as cofactor.

It catalyses the reaction L-histidinol phosphate + 2-oxoglutarate = 3-(imidazol-4-yl)-2-oxopropyl phosphate + L-glutamate. Its pathway is amino-acid biosynthesis; L-histidine biosynthesis; L-histidine from 5-phospho-alpha-D-ribose 1-diphosphate: step 7/9. This Escherichia coli O7:K1 (strain IAI39 / ExPEC) protein is Histidinol-phosphate aminotransferase.